Consider the following 898-residue polypeptide: Serine/threonine-protein kinase TAO3 (898 aa).

Residues 24–277 form the Protein kinase domain; the sequence is FVGLHEIGHG…SADLLRHDFV (254 aa). Residues 30–38 and Lys53 each bind ATP; that span reads IGHGSFGAV. Asp147 acts as the Proton acceptor in catalysis. Residues 316-374 form a disordered region; the sequence is TRNGPLTESQEEEEDSEHGSNLSRKMDSLGSNHSIPSMSVSTGSQSSSVSSMQEVLDES. Residues 334-351 are compositionally biased toward polar residues; that stretch reads GSNLSRKMDSLGSNHSIP. Low complexity predominate over residues 352–368; the sequence is SMSVSTGSQSSSVSSMQ. 3 coiled-coil regions span residues 452-502, 548-649, and 754-875; these read EQEN…THAN, FLES…HAML, and LKSL…IETF. Positions 565 to 596 are disordered; it reads EEMNEDHSTPKKEKQERISKHKENLQHTQAEE.

Belongs to the protein kinase superfamily. STE Ser/Thr protein kinase family. STE20 subfamily.

The protein localises to the cytoplasm. It localises to the cell membrane. Its subcellular location is the membrane raft. It is found in the lipid droplet. It catalyses the reaction L-seryl-[protein] + ATP = O-phospho-L-seryl-[protein] + ADP + H(+). It carries out the reaction L-threonyl-[protein] + ATP = O-phospho-L-threonyl-[protein] + ADP + H(+). Its function is as follows. Serine/threonine-protein kinase that acts as a regulator of the p38/MAPK14 stress-activated MAPK cascade and of the MAPK8/JNK cascade. In response to DNA damage, involved in the G2/M transition DNA damage checkpoint by activating the p38/MAPK14 stress-activated MAPK cascade, probably by mediating phosphorylation of upstream MAP kinase kinases. Inhibits basal activity of the MAPK8/JNK cascade. This is Serine/threonine-protein kinase TAO3 (TAOK3) from Gallus gallus (Chicken).